The following is a 245-amino-acid chain: 2,3-bisphosphoglycerate-dependent phosphoglycerate mutase 1 (245 aa).

Substrate is bound by residues 8-15, 21-22, arginine 60, 87-90, lysine 98, 114-115, and 183-184; these read RHGQSLWN, TG, ERHY, RR, and GN. The active-site Tele-phosphohistidine intermediate is the histidine 9. The Proton donor/acceptor role is filled by glutamate 87.

The protein belongs to the phosphoglycerate mutase family. BPG-dependent PGAM subfamily.

The enzyme catalyses (2R)-2-phosphoglycerate = (2R)-3-phosphoglycerate. It participates in carbohydrate degradation; glycolysis; pyruvate from D-glyceraldehyde 3-phosphate: step 3/5. In terms of biological role, catalyzes the interconversion of 2-phosphoglycerate and 3-phosphoglycerate. This chain is 2,3-bisphosphoglycerate-dependent phosphoglycerate mutase 1, found in Bacillus cereus (strain ATCC 10987 / NRS 248).